A 630-amino-acid polypeptide reads, in one-letter code: tRNA uridine 5-carboxymethylaminomethyl modification enzyme MnmG (630 aa).

Residue 13–18 (GGGHAG) coordinates FAD. NAD(+) is bound at residue 273–287 (GPRYCPSIEDKIHRF).

Belongs to the MnmG family. Homodimer. Heterotetramer of two MnmE and two MnmG subunits. FAD serves as cofactor.

It localises to the cytoplasm. NAD-binding protein involved in the addition of a carboxymethylaminomethyl (cmnm) group at the wobble position (U34) of certain tRNAs, forming tRNA-cmnm(5)s(2)U34. This chain is tRNA uridine 5-carboxymethylaminomethyl modification enzyme MnmG, found in Pseudomonas putida (Arthrobacter siderocapsulatus).